Reading from the N-terminus, the 206-residue chain is Ras-related protein Rab-7b (206 aa).

Gly-15–Thr-22 serves as a coordination point for GTP. Ser-17 and Ser-23 each carry phosphoserine. Residues Thr-34, Thr-40, and Thr-64 each carry the phosphothreonine modification. GTP is bound by residues Thr-34–Thr-40 and Asp-63–Gln-67. The Effector region signature appears at Tyr-37–Phe-45. Position 72 is a phosphoserine (Ser-72). Phosphotyrosine occurs at positions 78 and 88. GTP-binding positions include Asn-125–Asp-128 and Ala-157–Lys-158. 2 S-geranylgeranyl cysteine lipidation sites follow: Cys-205 and Cys-206.

The protein belongs to the small GTPase superfamily. Rab family. In terms of processing, glycosylated.

Its subcellular location is the cytoplasm. It is found in the cytoskeleton. The polypeptide is Ras-related protein Rab-7b (Paramecium octaurelia).